Here is a 107-residue protein sequence, read N- to C-terminus: Large ribosomal subunit protein uL24 (107 aa).

It belongs to the universal ribosomal protein uL24 family. As to quaternary structure, part of the 50S ribosomal subunit.

Functionally, one of two assembly initiator proteins, it binds directly to the 5'-end of the 23S rRNA, where it nucleates assembly of the 50S subunit. In terms of biological role, one of the proteins that surrounds the polypeptide exit tunnel on the outside of the subunit. In Thermoanaerobacter pseudethanolicus (strain ATCC 33223 / 39E) (Clostridium thermohydrosulfuricum), this protein is Large ribosomal subunit protein uL24.